We begin with the raw amino-acid sequence, 202 residues long: Probable molybdenum cofactor guanylyltransferase (202 aa).

GTP contacts are provided by residues 9 to 11 (VAG), K22, N50, D77, and D102. Residue D102 participates in Mg(2+) binding.

It belongs to the MobA family. Mg(2+) serves as cofactor.

It localises to the cytoplasm. The catalysed reaction is Mo-molybdopterin + GTP + H(+) = Mo-molybdopterin guanine dinucleotide + diphosphate. Functionally, transfers a GMP moiety from GTP to Mo-molybdopterin (Mo-MPT) cofactor (Moco or molybdenum cofactor) to form Mo-molybdopterin guanine dinucleotide (Mo-MGD) cofactor. The protein is Probable molybdenum cofactor guanylyltransferase of Natronomonas pharaonis (strain ATCC 35678 / DSM 2160 / CIP 103997 / JCM 8858 / NBRC 14720 / NCIMB 2260 / Gabara) (Halobacterium pharaonis).